A 283-amino-acid polypeptide reads, in one-letter code: Digeranylgeranylglyceryl phosphate synthase (283 aa).

Helical transmembrane passes span 5–27, 37–57, 85–105, 128–148, 152–172, 203–223, 228–248, and 263–283; these read VEIIRPGNVIMAIIAVILVAILA, AMLAVFFAMSAGNVINDYFDY, LLFILAAIVGFLISCLVDTWI, PLIGNLTVGFMTGLCFIFAGY, EGLIIYESYLLAFFALIMTTA, AIIAISLIIIDCALCPLLYIY, INYLIVVSIAVLIFLYGAVLL, and LKTGMLIAFIAFAIGTFTITF.

Belongs to the UbiA prenyltransferase family. DGGGP synthase subfamily. Mg(2+) serves as cofactor.

The protein resides in the cell membrane. It catalyses the reaction sn-3-O-(geranylgeranyl)glycerol 1-phosphate + (2E,6E,10E)-geranylgeranyl diphosphate = 2,3-bis-O-(geranylgeranyl)-sn-glycerol 1-phosphate + diphosphate. The protein operates within membrane lipid metabolism; glycerophospholipid metabolism. Functionally, prenyltransferase that catalyzes the transfer of the geranylgeranyl moiety of geranylgeranyl diphosphate (GGPP) to the C2 hydroxyl of (S)-3-O-geranylgeranylglyceryl phosphate (GGGP). This reaction is the second ether-bond-formation step in the biosynthesis of archaeal membrane lipids. In Methanobrevibacter smithii (strain ATCC 35061 / DSM 861 / OCM 144 / PS), this protein is Digeranylgeranylglyceryl phosphate synthase.